The primary structure comprises 528 residues: tRNA-2-methylthio-N(6)-dimethylallyladenosine synthase (528 aa).

An MTTase N-terminal domain is found at 19–134 (RTYEVRTYGC…LPTLLERARH (116 aa)). The [4Fe-4S] cluster site is built by Cys-28, Cys-63, Cys-97, Cys-171, Cys-175, and Cys-178. Residues 157-387 (RDEIASGWVS…TALQERISHE (231 aa)) enclose the Radical SAM core domain. One can recognise a TRAM domain in the interval 390-460 (QRVVGRTVEV…PFHLIADSVD (71 aa)).

This sequence belongs to the methylthiotransferase family. MiaB subfamily. In terms of assembly, monomer. Requires [4Fe-4S] cluster as cofactor.

Its subcellular location is the cytoplasm. It catalyses the reaction N(6)-dimethylallyladenosine(37) in tRNA + (sulfur carrier)-SH + AH2 + 2 S-adenosyl-L-methionine = 2-methylsulfanyl-N(6)-dimethylallyladenosine(37) in tRNA + (sulfur carrier)-H + 5'-deoxyadenosine + L-methionine + A + S-adenosyl-L-homocysteine + 2 H(+). Functionally, catalyzes the methylthiolation of N6-(dimethylallyl)adenosine (i(6)A), leading to the formation of 2-methylthio-N6-(dimethylallyl)adenosine (ms(2)i(6)A) at position 37 in tRNAs that read codons beginning with uridine. The protein is tRNA-2-methylthio-N(6)-dimethylallyladenosine synthase of Clavibacter michiganensis subsp. michiganensis (strain NCPPB 382).